The chain runs to 189 residues: Large ribosomal subunit protein uL6 (189 aa).

The protein belongs to the universal ribosomal protein uL6 family. As to quaternary structure, part of the 50S ribosomal subunit.

This protein binds to the 23S rRNA, and is important in its secondary structure. It is located near the subunit interface in the base of the L7/L12 stalk, and near the tRNA binding site of the peptidyltransferase center. This Bacteroides thetaiotaomicron (strain ATCC 29148 / DSM 2079 / JCM 5827 / CCUG 10774 / NCTC 10582 / VPI-5482 / E50) protein is Large ribosomal subunit protein uL6.